A 463-amino-acid polypeptide reads, in one-letter code: Argininosuccinate lyase (463 aa).

This sequence belongs to the lyase 1 family. Argininosuccinate lyase subfamily.

The protein localises to the cytoplasm. It catalyses the reaction 2-(N(omega)-L-arginino)succinate = fumarate + L-arginine. It functions in the pathway amino-acid biosynthesis; L-arginine biosynthesis; L-arginine from L-ornithine and carbamoyl phosphate: step 3/3. This is Argininosuccinate lyase from Methylorubrum extorquens (strain CM4 / NCIMB 13688) (Methylobacterium extorquens).